The chain runs to 955 residues: 2-oxoglutarate dehydrogenase E1 component (955 aa).

This sequence belongs to the alpha-ketoglutarate dehydrogenase family. Homodimer. Part of the 2-oxoglutarate dehydrogenase (OGDH) complex composed of E1 (2-oxoglutarate dehydrogenase), E2 (dihydrolipoamide succinyltransferase) and E3 (dihydrolipoamide dehydrogenase); the complex contains multiple copies of the three enzymatic components (E1, E2 and E3). Requires thiamine diphosphate as cofactor.

The catalysed reaction is N(6)-[(R)-lipoyl]-L-lysyl-[protein] + 2-oxoglutarate + H(+) = N(6)-[(R)-S(8)-succinyldihydrolipoyl]-L-lysyl-[protein] + CO2. E1 component of the 2-oxoglutarate dehydrogenase (OGDH) complex which catalyzes the decarboxylation of 2-oxoglutarate, the first step in the conversion of 2-oxoglutarate to succinyl-CoA and CO(2). The protein is 2-oxoglutarate dehydrogenase E1 component of Bacillus cereus (strain ATCC 14579 / DSM 31 / CCUG 7414 / JCM 2152 / NBRC 15305 / NCIMB 9373 / NCTC 2599 / NRRL B-3711).